A 614-amino-acid chain; its full sequence is Pentatricopeptide repeat-containing protein At1g63080, mitochondrial (614 aa).

The transit peptide at 1–7 directs the protein to the mitochondrion; that stretch reads MSLAKRF. PPR repeat units lie at residues 64–98, 99–133, 134–168, 169–203, 204–238, 239–273, 274–308, 309–343, 344–378, 379–413, 414–448, 449–483, 484–518, 519–553, and 554–588; these read SIVE…GVSH, NLYT…GYGP, SIVT…GYQP, DTVT…GCQP, DLVT…KIEA, DVVI…GIRP, DVFT…KINP, NVVT…SIDP, NIVT…DCLP, DVVT…GLVG, NTVT…GVHP, NIMT…KMEP, DIYT…GVKP, DVIA…GPLP, and DSGT…RFAG.

This sequence belongs to the PPR family. P subfamily.

It localises to the mitochondrion. The polypeptide is Pentatricopeptide repeat-containing protein At1g63080, mitochondrial (Arabidopsis thaliana (Mouse-ear cress)).